The sequence spans 836 residues: CUB domain-containing protein 1 (836 aa).

A signal peptide spans Met-1–Ala-29. The Extracellular segment spans residues Phe-30–Thr-667. N-linked (GlcNAc...) asparagine glycans are attached at residues Asn-39, Asn-122, Asn-180, Asn-205, Asn-270, Asn-310, and Asn-386. The 128-residue stretch at Cys-417 to Glu-544 folds into the CUB domain. Cys-476 and Cys-499 are oxidised to a cystine. A helical transmembrane segment spans residues Val-668 to Ile-688. Residues Cys-689–Glu-836 lie on the Cytoplasmic side of the membrane. Phosphotyrosine is present on Tyr-734. Residues Pro-776 to Glu-836 are disordered.

Interacts with CDH2/N-cadherin, CDH3/P-cadherin, SDC1/syndecan-1, SDC4/syndecan-4 and the serine protease ST14/MT-SP1. Also interacts with SRC and PRKCG/protein kinase C gamma. In terms of processing, phosphorylated on tyrosine by kinases of the SRC family such as SRC and YES as well as by the protein kinase C gamma/PRKCG. Dephosphorylated by phosphotyrosine phosphatases. Also phosphorylated by suramin, a heparin analog. Tyrosine phosphorylated in response to dissociation of integrin alpha-6 beta-4 from laminin-5. Post-translationally, N-glycosylated. A soluble form may also be produced by proteolytic cleavage at the cell surface (shedding). Another peptide of 80 kDa (p80) is present in cultured keratinocytes probably due to tryptic cleavage at an unidentified site on its N-terminal side. Converted to p80 by plasmin, a trypsin-like protease. In terms of tissue distribution, highly expressed in mitotic cells with low expression during interphase. Detected at highest levels in skeletal muscle and colon with lower levels in kidney, small intestine, placenta and lung. Up-regulated in a number of human tumor cell lines, as well as in colorectal cancer, breast carcinoma and lung cancer. Also expressed in cells with phenotypes reminiscent of mesenchymal stem cells and neural stem cells.

Its subcellular location is the cell membrane. The protein localises to the secreted. In terms of biological role, may be involved in cell adhesion and cell matrix association. May play a role in the regulation of anchorage versus migration or proliferation versus differentiation via its phosphorylation. May be a novel marker for leukemia diagnosis and for immature hematopoietic stem cell subsets. Belongs to the tetraspanin web involved in tumor progression and metastasis. The polypeptide is CUB domain-containing protein 1 (CDCP1) (Homo sapiens (Human)).